We begin with the raw amino-acid sequence, 551 residues long: HTH-type transcriptional regulator SgrR (551 aa).

The region spanning 1 to 116 (MPSARLQQQF…LVSHLGRSFR (116 aa)) is the HTH marR-type domain. A DNA-binding region (H-T-H motif) is located at residues 26 to 49 (LNELAALLSCSRRHMRTLLNTMQD). Residues 163 to 492 (ELEADIAHHW…IDWQADAARW (330 aa)) are solute-binding.

Functionally, activates the small RNA gene sgrS under glucose-phosphate stress conditions as well as yfdZ. Represses its own transcription under both stress and non-stress conditions. Might act as a sensor of the intracellular accumulation of phosphoglucose by binding these molecules in its C-terminal solute-binding domain. This is HTH-type transcriptional regulator SgrR from Shigella sonnei (strain Ss046).